The primary structure comprises 60 residues: Large ribosomal subunit protein uL30 (60 aa).

This sequence belongs to the universal ribosomal protein uL30 family. As to quaternary structure, part of the 50S ribosomal subunit.

This chain is Large ribosomal subunit protein uL30, found in Streptococcus uberis (strain ATCC BAA-854 / 0140J).